The primary structure comprises 369 residues: Peptide chain release factor 2 (369 aa).

Residue Q251 is modified to N5-methylglutamine.

The protein belongs to the prokaryotic/mitochondrial release factor family. Methylated by PrmC. Methylation increases the termination efficiency of RF2.

The protein resides in the cytoplasm. Peptide chain release factor 2 directs the termination of translation in response to the peptide chain termination codons UGA and UAA. This is Peptide chain release factor 2 (prfB) from Thermotoga maritima (strain ATCC 43589 / DSM 3109 / JCM 10099 / NBRC 100826 / MSB8).